A 181-amino-acid polypeptide reads, in one-letter code: SAGA-associated factor 11 (181 aa).

The SGF11-type zinc-finger motif lies at 93–114 (FNCMNCGRQIVAGRFAPHLEKC). The span at 116–125 (GKGRKARAKT) shows a compositional bias: basic residues. Positions 116–181 (GKGRKARAKT…FTVRENVKGD (66 aa)) are disordered. Positions 126–153 (TRSTTAAQNRNARRSPNPRYSPYPNSAS) are enriched in low complexity.

It belongs to the SGF11 family. In terms of assembly, component of a deubiquitination module (DUB module) formed by ENY2, SGF11, and UBP22 in Arabidopsis. Interacts directly with ENY2 and UBP22. Interacts with DDA1. Ubiquitinated in DET1-dependent manner. Ubiquitination probably leads to its subsequent proteasomal degradation.

The protein localises to the nucleus. The protein resides in the nucleoplasm. Its function is as follows. Component of a deubiquitination module (DUB module) that specifically deubiquinates monoubiquinated histone H2B (H2Bub). Does not seem to be a component of the TREX-2 complex. Seems to act independently of the SAGA multiprotein complex. The DUB module is responsible for the major H2Bub deubiquitinase activity in Arabidopsis. In Arabidopsis thaliana (Mouse-ear cress), this protein is SAGA-associated factor 11.